A 692-amino-acid polypeptide reads, in one-letter code: Small conductance calcium-activated potassium channel-like protein 3 (692 aa).

A helical membrane pass occupies residues 270–290; that stretch reads SLYLALFGVILMLVESEITAE. Residues 313-333 traverse the membrane as a helical segment; the sequence is TIALLYHIILYHLNDIVLELV. The chain crosses the membrane as a helical span at residues 349 to 369; the sequence is VIQFCIEFICCGICPLPGSGE. Residues 401 to 421 form a helical membrane-spanning segment; the sequence is VILSCFMLCRSYLFARFMVLH. A helical transmembrane segment spans residues 455 to 475; sequence PVLFLTTFTFIFWIIMSWMFV. An intramembrane region (pore-forming) is located at residues 492–512; the sequence is YSNSLWFIAITFMLNGYGDIV. Residues 520-540 form a helical membrane-spanning segment; it reads FIAIFVGVVGAVISSILIAVI. Over residues 667–683 the composition is skewed to polar residues; that stretch reads HSTPNVPHLQGLTSSPV. The disordered stretch occupies residues 667–692; that stretch reads HSTPNVPHLQGLTSSPVPSDRYDNRF.

This sequence belongs to the potassium channel KCNN family. SK subfamily. In terms of assembly, heterooligomer.

The protein resides in the membrane. Functionally, forms a voltage-independent potassium channel activated by intracellular calcium. The polypeptide is Small conductance calcium-activated potassium channel-like protein 3 (kcnl-3) (Caenorhabditis elegans).